The following is a 131-amino-acid chain: Glycine cleavage system H protein (131 aa).

In terms of domain architecture, Lipoyl-binding spans 24–106 (TVRVGITDYA…YGEGWLVELQ (83 aa)). K65 carries the post-translational modification N6-lipoyllysine.

Belongs to the GcvH family. The glycine cleavage system is composed of four proteins: P, T, L and H. (R)-lipoate serves as cofactor.

In terms of biological role, the glycine cleavage system catalyzes the degradation of glycine. The H protein shuttles the methylamine group of glycine from the P protein to the T protein. The protein is Glycine cleavage system H protein of Mycolicibacterium vanbaalenii (strain DSM 7251 / JCM 13017 / BCRC 16820 / KCTC 9966 / NRRL B-24157 / PYR-1) (Mycobacterium vanbaalenii).